The chain runs to 308 residues: 1D-myo-inositol 2-acetamido-2-deoxy-alpha-D-glucopyranoside deacetylase (308 aa).

Zn(2+) contacts are provided by histidine 18, aspartate 21, and histidine 153.

The protein belongs to the MshB deacetylase family. Requires Zn(2+) as cofactor.

It carries out the reaction 1D-myo-inositol 2-acetamido-2-deoxy-alpha-D-glucopyranoside + H2O = 1D-myo-inositol 2-amino-2-deoxy-alpha-D-glucopyranoside + acetate. In terms of biological role, catalyzes the deacetylation of 1D-myo-inositol 2-acetamido-2-deoxy-alpha-D-glucopyranoside (GlcNAc-Ins) in the mycothiol biosynthesis pathway. This chain is 1D-myo-inositol 2-acetamido-2-deoxy-alpha-D-glucopyranoside deacetylase, found in Salinispora arenicola (strain CNS-205).